The following is a 156-amino-acid chain: ATP synthase subunit b (156 aa).

Residues alanine 11 to alanine 31 traverse the membrane as a helical segment.

It belongs to the ATPase B chain family. F-type ATPases have 2 components, F(1) - the catalytic core - and F(0) - the membrane proton channel. F(1) has five subunits: alpha(3), beta(3), gamma(1), delta(1), epsilon(1). F(0) has three main subunits: a(1), b(2) and c(10-14). The alpha and beta chains form an alternating ring which encloses part of the gamma chain. F(1) is attached to F(0) by a central stalk formed by the gamma and epsilon chains, while a peripheral stalk is formed by the delta and b chains.

It is found in the cell inner membrane. Its function is as follows. F(1)F(0) ATP synthase produces ATP from ADP in the presence of a proton or sodium gradient. F-type ATPases consist of two structural domains, F(1) containing the extramembraneous catalytic core and F(0) containing the membrane proton channel, linked together by a central stalk and a peripheral stalk. During catalysis, ATP synthesis in the catalytic domain of F(1) is coupled via a rotary mechanism of the central stalk subunits to proton translocation. Component of the F(0) channel, it forms part of the peripheral stalk, linking F(1) to F(0). The protein is ATP synthase subunit b of Photorhabdus laumondii subsp. laumondii (strain DSM 15139 / CIP 105565 / TT01) (Photorhabdus luminescens subsp. laumondii).